The chain runs to 264 residues: 3-methyl-2-oxobutanoate hydroxymethyltransferase (264 aa).

Residues Asp45 and Asp84 each coordinate Mg(2+). 3-methyl-2-oxobutanoate-binding positions include 45–46 (DS), Asp84, and Lys112. Glu114 is a binding site for Mg(2+). Glu181 acts as the Proton acceptor in catalysis.

Belongs to the PanB family. Homodecamer; pentamer of dimers. Requires Mg(2+) as cofactor.

Its subcellular location is the cytoplasm. The catalysed reaction is 3-methyl-2-oxobutanoate + (6R)-5,10-methylene-5,6,7,8-tetrahydrofolate + H2O = 2-dehydropantoate + (6S)-5,6,7,8-tetrahydrofolate. It participates in cofactor biosynthesis; (R)-pantothenate biosynthesis; (R)-pantoate from 3-methyl-2-oxobutanoate: step 1/2. Catalyzes the reversible reaction in which hydroxymethyl group from 5,10-methylenetetrahydrofolate is transferred onto alpha-ketoisovalerate to form ketopantoate. The protein is 3-methyl-2-oxobutanoate hydroxymethyltransferase of Aeromonas salmonicida (strain A449).